An 89-amino-acid polypeptide reads, in one-letter code: Dynein light chain 1, cytoplasmic (89 aa).

Lys-36 carries the N6-acetyllysine modification. Lys-43 is covalently cross-linked (Glycyl lysine isopeptide (Lys-Gly) (interchain with G-Cter in SUMO2)). Positions 67–89 are interaction with ESR1; it reads THETKHFIYFYLGQVAILLFKSG. Ser-88 carries the phosphoserine modification.

This sequence belongs to the dynein light chain family. Homodimer. Monomer; the monomeric form is incapable of binding to target proteins. The cytoplasmic dynein 1 complex consists of two catalytic heavy chains (HCs) and a number of non-catalytic subunits presented by intermediate chains (ICs), light intermediate chains (LICs) and light chains (LCs); the composition seems to vary in respect to the IC, LIC and LC composition. The heavy chain homodimer serves as a scaffold for the probable homodimeric assembly of the respective non-catalytic subunits. The ICs and LICs bind directly to the HC dimer and the LCs assemble on the IC dimer. Interacts with TXNDC17. Interacts with WWC1 and ESR1. The WWC1-DYNLL1 interaction is mandatory for the recruitment and transactivation functions of ESR1 or DYNLL1 to the target chromatin. Interacts with BCL2L11. Interacts with BCL2; the interaction is greatly enhanced in the nucleus and in mitochondria upon induction of apoptosis. Interacts with PAK1; the interaction requires dimeric DYNLL1. Interacts with MYZAP. Part of an astrin (SPAG5)-kinastrin (SKAP) complex containing KNSTRN, SPAG5, PLK1, DYNLL1 and SGO2. Interacts with ATMIN; this interaction inhibits ATMIN transcriptional activity and hence may play a role in a feedback loop whereby DYNLL1 inhibits transactivation of its own promoter by ATMIN. Interacts with NEK9 (not phosphorylated at 'Ser-944'). Interacts with BICD2. Interacts with BCAS1. Interacts with Basson/BSN. Interacts with HDAC6. Interacts with TPPP. Interacts with AMBRA1 (via TQT motifs); tethering AMBRA1 to the cytoskeleton. Interacts with FAM83D/CHICA (via C-terminus). Interacts with HMMR, SPAG5/Astrin and KNSTRN/Kinastrin. Interacts with TLK2. Interacts with NOS1. Interacts with WWC1, WWC2 and WWC3. Interacts with MRE11; inhibiting MRE11 homodimerization and activity. As to quaternary structure, (Microbial infection) Interacts with bovine immunodeficiency virus Gag protein; this interaction is critical for intracellular microtubule-dependent viral genome transport. In terms of processing, phosphorylation at Ser-88 promotes recruitment to DNA double-strand breaks (DSBs) by TP53BP1 and ability to inhibit MRE11.

The protein localises to the cytoplasm. It is found in the cytoskeleton. The protein resides in the microtubule organizing center. Its subcellular location is the centrosome. It localises to the chromosome. The protein localises to the nucleus. It is found in the mitochondrion. Functionally, acts as one of several non-catalytic accessory components of the cytoplasmic dynein 1 complex that are thought to be involved in linking dynein to cargos and to adapter proteins that regulate dynein function. Cytoplasmic dynein 1 acts as a motor for the intracellular retrograde motility of vesicles and organelles along microtubules. May play a role in changing or maintaining the spatial distribution of cytoskeletal structures. In addition to its role in cytoskeleton and transport, acts as a protein-protein adapter, which inhibits and/or sequesters target proteins. Involved in the response to DNA damage by acting as a key regulator of DNA end resection: when phosphorylated at Ser-88, recruited to DNA double-strand breaks (DSBs) by TP53BP1 and acts by disrupting MRE11 dimerization, thereby inhibiting DNA end resection. In a subset of DSBs, DYNLL1 remains unphosphorylated and promotes the recruitment of the Shieldin complex. Binds and inhibits the catalytic activity of neuronal nitric oxide synthase/NOS1. Promotes transactivation functions of ESR1 and plays a role in the nuclear localization of ESR1. Regulates apoptotic activities of BCL2L11 by sequestering it to microtubules. Upon apoptotic stimuli the BCL2L11-DYNLL1 complex dissociates from cytoplasmic dynein and translocates to mitochondria and sequesters BCL2 thus neutralizing its antiapoptotic activity. The chain is Dynein light chain 1, cytoplasmic (DYNLL1) from Bos taurus (Bovine).